Here is a 483-residue protein sequence, read N- to C-terminus: Endoplasmic reticulum lectin 1 (483 aa).

The first 33 residues, 1–33 (MEEGGGGVRSLVPGGPVLLVLCGLLEASGGGRA), serve as a signal peptide directing secretion. MRH domains follow at residues 111-246 (SSCS…LCSH) and 342-469 (SYCF…ICKI). A disulfide bridge links Cys-113 with Cys-126. An N-linked (GlcNAc...) asparagine glycan is attached at Asn-195. 5 disulfides stabilise this stretch: Cys-199-Cys-232, Cys-215-Cys-244, Cys-344-Cys-357, Cys-421-Cys-455, and Cys-436-Cys-467.

As to quaternary structure, may form a complex with OS9, HSPA5, SYVN1, and SEL1L with which it interacts directly. Interacts (via PRKCSH 2 domain) with KREMEN2 (when glycosylated). Interacts with HSPA5. Post-translationally, isoform 1 and isoform 2 are N-glycosylated.

The protein localises to the endoplasmic reticulum lumen. Probable lectin that binds selectively to improperly folded lumenal proteins. May function in endoplasmic reticulum quality control and endoplasmic reticulum-associated degradation (ERAD) of both non-glycosylated proteins and glycoproteins. This chain is Endoplasmic reticulum lectin 1 (ERLEC1), found in Homo sapiens (Human).